A 458-amino-acid polypeptide reads, in one-letter code: Bifunctional thioredoxin reductase/thioredoxin (458 aa).

Positions 1-321 are thioredoxin reductase; it reads MNTTPSAHET…LAEHAGSKAN (321 aa). FAD contacts are provided by residues 19–22, 41–48, asparagine 57, and valine 90; these read SGPA and EGTSFGGA. A disulfide bond links cysteine 142 and cysteine 145. Residues serine 163, histidine 182, arginine 188, isoleucine 245, and tyrosine 265 each coordinate NADP(+). FAD contacts are provided by residues aspartate 285 and 292–295; that span reads RQAI. Arginine 292 serves as a coordination point for NADP(+). The segment at 322–347 is linker; the sequence is ETTEETGDVDSTDTTDWSTAMTDAKN. The Thioredoxin domain occupies 341–455; sequence AMTDAKNAGV…LLRDLSDVVP (115 aa). A disulfide bond links cysteine 379 and cysteine 382.

The protein in the N-terminal section; belongs to the class-II pyridine nucleotide-disulfide oxidoreductase family. As to quaternary structure, homodimer. FAD is required as a cofactor.

The protein resides in the cytoplasm. The enzyme catalyses [thioredoxin]-dithiol + NADP(+) = [thioredoxin]-disulfide + NADPH + H(+). The chain is Bifunctional thioredoxin reductase/thioredoxin (trxB/A) from Mycobacterium leprae (strain TN).